A 269-amino-acid chain; its full sequence is LOB domain-containing protein 6 (269 aa).

Positions 37-138 (SPCAACKFLR…QDLARAKFEL (102 aa)) constitute an LOB domain.

The protein belongs to the LOB domain-containing protein family.

The protein resides in the nucleus. Negative regulator of cell proliferation in the adaxial side of leaves. Regulates the formation of a symmetric lamina and the establishment of venation. The polypeptide is LOB domain-containing protein 6 (LBD6) (Oryza sativa subsp. indica (Rice)).